Reading from the N-terminus, the 276-residue chain is Glutamate racemase (276 aa).

Substrate contacts are provided by residues 10-11 and 42-43; these read DS and YG. The active-site Proton donor/acceptor is Cys-73. Residue 74–75 coordinates substrate; the sequence is NS. The active-site Proton donor/acceptor is the Cys-183. Substrate is bound at residue 184 to 185; that stretch reads TH.

It belongs to the aspartate/glutamate racemases family.

It catalyses the reaction L-glutamate = D-glutamate. It functions in the pathway cell wall biogenesis; peptidoglycan biosynthesis. Functionally, provides the (R)-glutamate required for cell wall biosynthesis. The sequence is that of Glutamate racemase from Parafrankia sp. (strain EAN1pec).